The sequence spans 537 residues: CTP synthase (537 aa).

The amidoligase domain stretch occupies residues 1–268 (MNTKYIFVTG…DNLVCKKLKL (268 aa)). S14 lines the CTP pocket. Residue S14 coordinates UTP. 15–20 (SLGKGI) serves as a coordination point for ATP. Y55 contributes to the L-glutamine binding site. D72 serves as a coordination point for ATP. Positions 72 and 142 each coordinate Mg(2+). CTP contacts are provided by residues 149-151 (DIE), 189-194 (KTKPTQ), and K225. Residues 189–194 (KTKPTQ) and K225 contribute to the UTP site. The Glutamine amidotransferase type-1 domain occupies 293-535 (NIALVGKYVE…IKASLNSKHK (243 aa)). An L-glutamine-binding site is contributed by G355. C382 acts as the Nucleophile; for glutamine hydrolysis in catalysis. L-glutamine-binding positions include 383–386 (LGMQ), E406, and R463. Catalysis depends on residues H508 and E510.

Belongs to the CTP synthase family. In terms of assembly, homotetramer.

The catalysed reaction is UTP + L-glutamine + ATP + H2O = CTP + L-glutamate + ADP + phosphate + 2 H(+). It catalyses the reaction L-glutamine + H2O = L-glutamate + NH4(+). The enzyme catalyses UTP + NH4(+) + ATP = CTP + ADP + phosphate + 2 H(+). Its pathway is pyrimidine metabolism; CTP biosynthesis via de novo pathway; CTP from UDP: step 2/2. With respect to regulation, allosterically activated by GTP, when glutamine is the substrate; GTP has no effect on the reaction when ammonia is the substrate. The allosteric effector GTP functions by stabilizing the protein conformation that binds the tetrahedral intermediate(s) formed during glutamine hydrolysis. Inhibited by the product CTP, via allosteric rather than competitive inhibition. In terms of biological role, catalyzes the ATP-dependent amination of UTP to CTP with either L-glutamine or ammonia as the source of nitrogen. Regulates intracellular CTP levels through interactions with the four ribonucleotide triphosphates. The chain is CTP synthase from Clostridium kluyveri (strain ATCC 8527 / DSM 555 / NBRC 12016 / NCIMB 10680 / K1).